Consider the following 188-residue polypeptide: Probable manganese efflux pump MntP (188 aa).

6 consecutive transmembrane segments (helical) span residues 3-23 (YTATVLLAFGMSMDAFAASIG), 41-61 (LIFGAVETLTPLIGWGLGILA), 66-86 (LEWNHWIAFVLLIFLGGRMII), 106-128 (WLLVTTAIATSLDAMAVGVGLAF), 143-163 (ATLIMSTLGMMIGRFIGPMLG), and 168-188 (ILGGVVLIGIGVQILWTHFHG).

Belongs to the MntP (TC 9.B.29) family.

It localises to the cell inner membrane. Probably functions as a manganese efflux pump. The polypeptide is Probable manganese efflux pump MntP (Salmonella heidelberg (strain SL476)).